Consider the following 449-residue polypeptide: Phosphomethylpyrimidine synthase (449 aa).

Substrate is bound by residues Asn80, Met109, Tyr138, His173, 193 to 195 (SRG), 234 to 237 (DSLR), and Glu273. Position 277 (His277) interacts with Zn(2+). Residue Tyr300 participates in substrate binding. His341 is a Zn(2+) binding site. [4Fe-4S] cluster contacts are provided by Cys421, Cys424, and Cys429.

Belongs to the ThiC family. Homodimer. The cofactor is [4Fe-4S] cluster.

The enzyme catalyses 5-amino-1-(5-phospho-beta-D-ribosyl)imidazole + S-adenosyl-L-methionine = 4-amino-2-methyl-5-(phosphooxymethyl)pyrimidine + CO + 5'-deoxyadenosine + formate + L-methionine + 3 H(+). It participates in cofactor biosynthesis; thiamine diphosphate biosynthesis. Catalyzes the synthesis of the hydroxymethylpyrimidine phosphate (HMP-P) moiety of thiamine from aminoimidazole ribotide (AIR) in a radical S-adenosyl-L-methionine (SAM)-dependent reaction. The protein is Phosphomethylpyrimidine synthase of Campylobacter hominis (strain ATCC BAA-381 / DSM 21671 / CCUG 45161 / LMG 19568 / NCTC 13146 / CH001A).